The following is a 275-amino-acid chain: Adaptin ear-binding coat-associated protein 1 (275 aa).

Residues 168 to 275 form a disordered region; the sequence is AKKGGASKPR…APQPSNWVQF (108 aa). The span at 187–201 shows a compositional bias: pro residues; the sequence is LPPPPGGKVTIPPPS. At threonine 211 the chain carries Phosphothreonine. Over residues 233-248 the composition is skewed to low complexity; the sequence is SPAPVSTSAPAPVSTS. Short sequence motifs (WXXF motif) lie at residues 252 to 255 and 272 to 275; these read WGDF and WVQF. A compositionally biased stretch (polar residues) spans 256 to 275; sequence STASSSVPNQAPQPSNWVQF.

This sequence belongs to the NECAP family. Interacts with AP1G1 and AP2A1 components of the adapter protein complexes AP-1 and AP-2. Interacts with the GAE domain proteins GGA1, GGA2 and GGA3. Expressed primarily in brain (at protein level).

The protein localises to the cytoplasmic vesicle. Its subcellular location is the clathrin-coated vesicle membrane. It is found in the cell membrane. Involved in endocytosis. This Mus musculus (Mouse) protein is Adaptin ear-binding coat-associated protein 1 (Necap1).